A 482-amino-acid polypeptide reads, in one-letter code: Aspartyl/glutamyl-tRNA(Asn/Gln) amidotransferase subunit B (482 aa).

The protein belongs to the GatB/GatE family. GatB subfamily. Heterotrimer of A, B and C subunits.

It carries out the reaction L-glutamyl-tRNA(Gln) + L-glutamine + ATP + H2O = L-glutaminyl-tRNA(Gln) + L-glutamate + ADP + phosphate + H(+). It catalyses the reaction L-aspartyl-tRNA(Asn) + L-glutamine + ATP + H2O = L-asparaginyl-tRNA(Asn) + L-glutamate + ADP + phosphate + 2 H(+). Allows the formation of correctly charged Asn-tRNA(Asn) or Gln-tRNA(Gln) through the transamidation of misacylated Asp-tRNA(Asn) or Glu-tRNA(Gln) in organisms which lack either or both of asparaginyl-tRNA or glutaminyl-tRNA synthetases. The reaction takes place in the presence of glutamine and ATP through an activated phospho-Asp-tRNA(Asn) or phospho-Glu-tRNA(Gln). The chain is Aspartyl/glutamyl-tRNA(Asn/Gln) amidotransferase subunit B from Azotobacter vinelandii (strain DJ / ATCC BAA-1303).